We begin with the raw amino-acid sequence, 493 residues long: MNSTSLYAAIDLGSNSFHMLVVREAAGSIQTLTRIKRKVRLAAGLNNDNHLSAEAMERGWQCLRLFAERLQDIPQPQIRVVATATLRLAVNAGEFIAKAQTILGCPVQVISGEEEARLIYQGVAHTTGGADQRLVVDIGGASTELVTGTGAQTTSLFSLSMGCVTWLERYFSDRNLAQENFDDAEKAARDVLRPVADELRFHGWKVCVGASGTVQALQEIMMAQGMDERITLAKLQQLKQRAIQCGRLEELEIEGLTLERALVFPSGLAILIAIFTELNIQSMTLAGGALREGLVYGMLHLAVDQDIRSRTLRNIQRRFIVDTDQANRVAKLADNFLKQVENAWHIEPISRELLLSACQLHEIGLSVDFKQAPYHAAYLVRHLDLPGYTPAQKKLLATLLLNQTNPVDLSSLHQQNAVPPRVAEQLCRLLRLAILFAGRRRDDLVPEITLQALNENLTLTLPGDWLAHHPLGKELIDQESQWQSYVHWPLDVR.

The protein belongs to the GppA/Ppx family. GppA subfamily.

The catalysed reaction is guanosine 3'-diphosphate 5'-triphosphate + H2O = guanosine 3',5'-bis(diphosphate) + phosphate + H(+). Its pathway is purine metabolism; ppGpp biosynthesis; ppGpp from GTP: step 2/2. Catalyzes the conversion of pppGpp to ppGpp. Guanosine pentaphosphate (pppGpp) is a cytoplasmic signaling molecule which together with ppGpp controls the 'stringent response', an adaptive process that allows bacteria to respond to amino acid starvation, resulting in the coordinated regulation of numerous cellular activities. This chain is Guanosine-5'-triphosphate,3'-diphosphate pyrophosphatase, found in Salmonella agona (strain SL483).